We begin with the raw amino-acid sequence, 81 residues long: Photosystem I iron-sulfur center (81 aa).

4Fe-4S ferredoxin-type domains are found at residues serine 2–tryptophan 31 and isoleucine 39–tyrosine 68. Positions 11, 14, 17, 21, 48, 51, 54, and 58 each coordinate [4Fe-4S] cluster.

The eukaryotic PSI reaction center is composed of at least 11 subunits. The cofactor is [4Fe-4S] cluster.

The protein resides in the plastid thylakoid membrane. It catalyses the reaction reduced [plastocyanin] + hnu + oxidized [2Fe-2S]-[ferredoxin] = oxidized [plastocyanin] + reduced [2Fe-2S]-[ferredoxin]. Its function is as follows. Apoprotein for the two 4Fe-4S centers FA and FB of photosystem I (PSI); essential for photochemical activity. FB is the terminal electron acceptor of PSI, donating electrons to ferredoxin. The C-terminus interacts with PsaA/B/D and helps assemble the protein into the PSI complex. Required for binding of PsaD and PsaE to PSI. PSI is a plastocyanin-ferredoxin oxidoreductase, converting photonic excitation into a charge separation, which transfers an electron from the donor P700 chlorophyll pair to the spectroscopically characterized acceptors A0, A1, FX, FA and FB in turn. The polypeptide is Photosystem I iron-sulfur center (Cuscuta reflexa (Southern Asian dodder)).